Consider the following 94-residue polypeptide: U27-theraphotoxin-Cg1a (94 aa).

The first 22 residues, 1–22 (MIFLLPPVIFVMLLAESVLILG), serve as a signal peptide directing secretion. Positions 23-58 (DSEDADLMEMVQMSRPFFNPIIPAVEFVDLREERQR) are excised as a propeptide. 3 cysteine pairs are disulfide-bonded: Cys-60–Cys-78, Cys-67–Cys-83, and Cys-77–Cys-88.

Belongs to the neurotoxin 14 (magi-1) family. OAIP-1 subfamily. As to expression, expressed by the venom gland.

The protein resides in the secreted. Functionally, probable ion channel inhibitor. This chain is U27-theraphotoxin-Cg1a, found in Chilobrachys guangxiensis (Chinese earth tiger tarantula).